Here is a 76-residue protein sequence, read N- to C-terminus: uncharacterized protein (76 aa).

The chain crosses the membrane as a helical span at residues 40-60; it reads IVLNLVVLVGVVPLTWMFLGQ.

Its subcellular location is the membrane. This is an uncharacterized protein from Dictyostelium discoideum (Social amoeba).